The following is a 239-amino-acid chain: Ribonuclease 3 (239 aa).

Residues 18–141 (YLTLEKALGY…LMAGVYLEAG (124 aa)) form the RNase III domain. E54 is a Mg(2+) binding site. D58 is an active-site residue. Mg(2+) is bound by residues S127 and E130. E130 is a catalytic residue. The region spanning 168–237 (DYKTALQELT…AYQALQKLKE (70 aa)) is the DRBM domain.

This sequence belongs to the ribonuclease III family. As to quaternary structure, homodimer. The cofactor is Mg(2+).

Its subcellular location is the cytoplasm. It catalyses the reaction Endonucleolytic cleavage to 5'-phosphomonoester.. In terms of biological role, digests double-stranded RNA. Involved in the processing of primary rRNA transcript to yield the immediate precursors to the large and small rRNAs (23S and 16S). Processes some mRNAs, and tRNAs when they are encoded in the rRNA operon. Processes pre-crRNA and tracrRNA of type II CRISPR loci if present in the organism. The protein is Ribonuclease 3 of Helicobacter pylori (strain J99 / ATCC 700824) (Campylobacter pylori J99).